The following is a 97-amino-acid chain: MKFAAILLVTCVLFSLLPSHLSQGEESSMNIDAQRRPWCPSKKQVFGGSCGNDGAQQCLNNLLSTWDPSVRLSPVSCNCTPQPNNNILCSCPNMICP.

The signal sequence occupies residues 1–24 (MKFAAILLVTCVLFSLLPSHLSQG). Intrachain disulfides connect C39/C96, C50/C79, C58/C89, and C77/C91.

Belongs to the DEFL family. In terms of tissue distribution, flower buds and roots.

The protein localises to the secreted. In Arabidopsis thaliana (Mouse-ear cress), this protein is Defensin-like protein 245 (SCRL4).